Consider the following 273-residue polypeptide: Cyclic di-AMP synthase CdaA (273 aa).

A run of 3 helical transmembrane segments spans residues L12–I32, L40–S60, and T61–F81. Positions Q82–E242 constitute a DAC domain.

The protein belongs to the adenylate cyclase family. DacA/CdaA subfamily. As to quaternary structure, probably a homodimer. Interacts with CdaR. May interact with GlmM.

It is found in the cell membrane. It catalyses the reaction 2 ATP = 3',3'-c-di-AMP + 2 diphosphate. Its activity is regulated as follows. DAC activity is stimulated about 20-fold in E.coli by coexpression with CdaR. Functionally, one of 3 paralogous diadenylate cyclases (DAC) in this bacteria, catalyzing the condensation of 2 ATP molecules into cyclic di-AMP (c-di-AMP). Upon expression in E.coli leads to c-di-AMP synthesis. Probably the main producer of c-di-AMP for the cell; is probably implicated in control of peptidoglycan synthesis. In B.subtilis c-di-AMP is a second messenger that mediates growth, DNA repair and cell wall homeostasis; it is toxic when present in excess. The chain is Cyclic di-AMP synthase CdaA from Bacillus subtilis (strain 168).